A 188-amino-acid polypeptide reads, in one-letter code: Elongation factor P (188 aa).

Belongs to the elongation factor P family.

It localises to the cytoplasm. It functions in the pathway protein biosynthesis; polypeptide chain elongation. In terms of biological role, involved in peptide bond synthesis. Stimulates efficient translation and peptide-bond synthesis on native or reconstituted 70S ribosomes in vitro. Probably functions indirectly by altering the affinity of the ribosome for aminoacyl-tRNA, thus increasing their reactivity as acceptors for peptidyl transferase. The protein is Elongation factor P of Methylobacterium radiotolerans (strain ATCC 27329 / DSM 1819 / JCM 2831 / NBRC 15690 / NCIMB 10815 / 0-1).